The primary structure comprises 82 residues: uncharacterized protein (82 aa).

The next 2 helical transmembrane spans lie at 8–28 (LTTAAGILLMAFLSCLLLPAP) and 50–70 (LYTLLFCLWFLVLGAIEYFVL).

The protein localises to the cell membrane. This is an uncharacterized protein from Escherichia coli (strain K12).